The sequence spans 473 residues: Mitochondrial distribution and morphology protein 10 (473 aa).

It belongs to the MDM10 family. As to quaternary structure, component of the ER-mitochondria encounter structure (ERMES) or MDM complex, composed of MMM1, MDM10, MDM12 and MDM34. Associates with the mitochondrial outer membrane sorting assembly machinery SAM(core) complex.

The protein localises to the mitochondrion outer membrane. Component of the ERMES/MDM complex, which serves as a molecular tether to connect the endoplasmic reticulum and mitochondria. Components of this complex are involved in the control of mitochondrial shape and protein biogenesis and may function in phospholipid exchange. MDM10 is involved in the late assembly steps of the general translocase of the mitochondrial outer membrane (TOM complex). Functions in the TOM40-specific route of the assembly of outer membrane beta-barrel proteins, including the association of TOM40 with the receptor TOM22 and small TOM proteins. Can associate with the SAM(core) complex as well as the MDM12-MMM1 complex, both involved in late steps of the major beta-barrel assembly pathway, that is responsible for biogenesis of all outer membrane beta-barrel proteins. May act as a switch that shuttles between both complexes and channels precursor proteins into the TOM40-specific pathway. Plays a role in mitochondrial morphology and in the inheritance of mitochondria. The polypeptide is Mitochondrial distribution and morphology protein 10 (Candida albicans (strain SC5314 / ATCC MYA-2876) (Yeast)).